A 240-amino-acid polypeptide reads, in one-letter code: MIILPAIDIIDGKPVRLYQGDYNKKEIVADDVFETAKSFQDMGAEYIHLVDLDGAKSGSNQNHELVIKIANELNIPVELGGGIRSFETIKYLLDNGVARVILGTIAMEDEELLKKAIAIYDSKIAVGIDCKDGKVYGRGWLAASDLDYIEFAKKMENIGVKNIIVTDISKDGTLEGPNVEMLKKLKRTVSIDITASGGIKDIENIKELKNIDLYGAITGKAIYAKTLSLEKAIEISKEGR.

Catalysis depends on Asp-8, which acts as the Proton acceptor. The active-site Proton donor is Asp-129.

It belongs to the HisA/HisF family.

It is found in the cytoplasm. The enzyme catalyses 1-(5-phospho-beta-D-ribosyl)-5-[(5-phospho-beta-D-ribosylamino)methylideneamino]imidazole-4-carboxamide = 5-[(5-phospho-1-deoxy-D-ribulos-1-ylimino)methylamino]-1-(5-phospho-beta-D-ribosyl)imidazole-4-carboxamide. The protein operates within amino-acid biosynthesis; L-histidine biosynthesis; L-histidine from 5-phospho-alpha-D-ribose 1-diphosphate: step 4/9. The polypeptide is 1-(5-phosphoribosyl)-5-[(5-phosphoribosylamino)methylideneamino] imidazole-4-carboxamide isomerase (Clostridium beijerinckii (strain ATCC 51743 / NCIMB 8052) (Clostridium acetobutylicum)).